We begin with the raw amino-acid sequence, 448 residues long: Trigger factor (448 aa).

Positions 172–257 (GDRVTVDFVG…MKKVEWPHLP (86 aa)) constitute a PPIase FKBP-type domain.

The protein belongs to the FKBP-type PPIase family. Tig subfamily.

The protein resides in the cytoplasm. The enzyme catalyses [protein]-peptidylproline (omega=180) = [protein]-peptidylproline (omega=0). Its function is as follows. Involved in protein export. Acts as a chaperone by maintaining the newly synthesized protein in an open conformation. Functions as a peptidyl-prolyl cis-trans isomerase. The polypeptide is Trigger factor (Burkholderia multivorans (strain ATCC 17616 / 249)).